The sequence spans 140 residues: Protein SNA4 (140 aa).

Residues 1 to 8 (MCCYCVCC) are Cytoplasmic-facing. Residues Cys-2, Cys-3, Cys-5, Cys-7, and Cys-8 are each lipidated (S-palmitoyl cysteine). Residues 9-29 (TVSDFILYIVAFFFPPAAVLL) form a helical membrane-spanning segment. Topologically, residues 30 to 41 (RSGPCSSDFLLN) are vacuolar. A helical membrane pass occupies residues 42-62 (VLLTLLGFLPGMLHAFYYITI). Residues 63–140 (TSPLRNAEYV…LVESPPPYVP (78 aa)) are Cytoplasmic-facing. The segment at 84 to 140 (RNVPSNRPQNSQTPQNRPQQGSSARNVYPSVETPLLQGAAPHDNKQSLVESPPPYVP) is disordered. The span at 85–108 (NVPSNRPQNSQTPQNRPQQGSSAR) shows a compositional bias: polar residues. Residue Lys-128 forms a Glycyl lysine isopeptide (Lys-Gly) (interchain with G-Cter in ubiquitin) linkage. At Ser-134 the chain carries Phosphoserine.

This sequence belongs to the UPF0057 (PMP3) family.

The protein localises to the vacuole membrane. This Saccharomyces cerevisiae (strain ATCC 204508 / S288c) (Baker's yeast) protein is Protein SNA4 (SNA4).